The chain runs to 405 residues: S-adenosylmethionine synthase (405 aa).

Position 22 (histidine 22) interacts with ATP. Aspartate 24 is a binding site for Mg(2+). Glutamate 50 is a binding site for K(+). L-methionine is bound by residues glutamate 63 and glutamine 107. The interval 107-117 is flexible loop; the sequence is QSPDIAQGVNR. ATP contacts are provided by residues 184–186, 250–251, aspartate 259, 265–266, alanine 282, and lysine 286; these read DGK, RF, and RK. Residue aspartate 259 participates in L-methionine binding. Position 290 (lysine 290) interacts with L-methionine.

Belongs to the AdoMet synthase family. In terms of assembly, homotetramer; dimer of dimers. Mg(2+) serves as cofactor. It depends on K(+) as a cofactor.

It is found in the cytoplasm. The catalysed reaction is L-methionine + ATP + H2O = S-adenosyl-L-methionine + phosphate + diphosphate. It functions in the pathway amino-acid biosynthesis; S-adenosyl-L-methionine biosynthesis; S-adenosyl-L-methionine from L-methionine: step 1/1. Functionally, catalyzes the formation of S-adenosylmethionine (AdoMet) from methionine and ATP. The overall synthetic reaction is composed of two sequential steps, AdoMet formation and the subsequent tripolyphosphate hydrolysis which occurs prior to release of AdoMet from the enzyme. This is S-adenosylmethionine synthase from Roseiflexus castenholzii (strain DSM 13941 / HLO8).